The chain runs to 740 residues: F-BAR and double SH3 domains protein 2 (740 aa).

An F-BAR domain is found at 8–282 (VKVTQELRNI…NSSKVVRDYN (275 aa)). Positions 303–323 (PCDSDTSRQLESETGTTEEHS) are disordered. Basic and acidic residues predominate over residues 307–323 (DTSRQLESETGTTEEHS). Positions 356-397 (GVALSEQSRAELEQKIDEARESIRKAEIIKLKAEARLDLLKQ) form a coiled coil. SH3 domains lie at 469-530 (NYPL…FPTS) and 567-629 (ASVC…ELSA). A required and sufficient for location at clathrin-coated pits region spans residues 567 to 629 (ASVCFVKALY…PSVLVEELSA (63 aa)). A compositionally biased stretch (polar residues) spans 629 to 645 (ASENGDTPWTREIQISP). The tract at residues 629–740 (ASENGDTPWT…KMEDVEITLV (112 aa)) is disordered. The span at 646-657 (SPKPHTSLPPLP) shows a compositional bias: pro residues. Residues S675 and S681 each carry the phosphoserine modification. Positions 675-706 (SQFFPRSPSANENSLHAESPGFSQASRQTPDT) are enriched in polar residues.

Homodimer. Interacts (via SH3 domain 2) with ITSN1 (via SH3 domain 4). Recruited to clathrin-coated pits during a mid-to-late stage of assembly via interaction with ITSN1. Interacts (via SH3 domain 1) with WASL. Interacts with WAS. Interacts with CASK and MAGI1. CASK inhibits interaction with MAGI1. Phosphorylated. Phosphorylation on a Ser residue is important for recruitment to the cell membrane and for its role in promoting endocytosis. As to expression, detected in inner ear vestibula and in stereocilia in cochlear hair cell bundles (at protein level). Ubiquitous. Detected in testis, liver, brain cortex, cerebellum, kidney, organ of Corti, utricle, spiral ganglion, tongue and eye.

Its subcellular location is the cytoplasm. The protein localises to the cell junction. The protein resides in the membrane. It is found in the clathrin-coated pit. It localises to the cell membrane. Its subcellular location is the cell projection. The protein localises to the stereocilium. In terms of biological role, adapter protein that plays a role in endocytosis via clathrin-coated pits. Contributes to the internalization of cell surface receptors, such as integrin ITGB1 and transferrin receptor. Promotes endocytosis of EGFR in cancer cells, and thereby contributes to the down-regulation of EGFR signaling. Recruited to clathrin-coated pits during a mid-to-late stage of assembly, where it is required for normal progress from U-shaped intermediate stage pits to terminal, omega-shaped pits. Binds to membranes enriched in phosphatidylinositol 3,4-bisphosphate or phosphatidylinositol 3,4,5-trisphosphate. When bound to membranes, promotes actin polymerization via its interaction with WAS and/or WASL which leads to the activation of the Arp2/3 complex. Does not promote actin polymerisation in the absence of membranes. The chain is F-BAR and double SH3 domains protein 2 (Fchsd2) from Mus musculus (Mouse).